The primary structure comprises 856 residues: Wall-associated receptor kinase 17 (856 aa).

The signal sequence occupies residues 1–42 (MPSRSPACRPRGRNRRSAADAVARPLALALILVSTLPRAAHS). 2 N-linked (GlcNAc...) asparagine glycosylation sites follow: Asn-171 and Asn-234. The region spanning 297-334 (FEKLCKYGTCVDAPTGAGYLCKCPSGYDGNPYVSDGCQ) is the EGF-like 1 domain. Disulfide bonds link Cys-301–Cys-306, Cys-319–Cys-333, Cys-339–Cys-353, Cys-347–Cys-362, and Cys-364–Cys-379. The EGF-like 2; calcium-binding domain maps to 335-380 (DINECRNYNSNNCTYQNLCNNTLGGYTCSCPENNIGDGYRTGTGCN). Asn-346 and Asn-354 each carry an N-linked (GlcNAc...) asparagine glycan. N-linked (GlcNAc...) asparagine glycosylation is present at Asn-380. A helical transmembrane segment spans residues 452-470 (VLGVSLVLMVTTTTAASCY). The 279-residue stretch at 527-805 (YSESRILGRG…VLQELRRSFT (279 aa)) folds into the Protein kinase domain. ATP contacts are provided by residues 533–541 (LGRGGQGTV) and Lys-555. Asp-652 (proton acceptor) is an active-site residue. The segment at 816 to 844 (SIQENSEQEEKHLHESRSIPSLQSSEVST) is disordered. Residues 823–832 (QEEKHLHESR) are compositionally biased toward basic and acidic residues. Over residues 833–844 (SIPSLQSSEVST) the composition is skewed to polar residues.

This sequence belongs to the protein kinase superfamily. Ser/Thr protein kinase family. As to quaternary structure, interacts with WAK17 isoform 2; the interaction is direct. Interacts with LRR5; the interaction is direct. Interacts with WAK17 isoform 1; the interaction is direct. In terms of assembly, (Microbial infection) Interacts with G.zeae CFEM1 (via CFEM domain); the interaction is direct. Interacts with G.zeae CFEMN1; the interaction is direct. Interacts with G.zeae CFEM5; the interaction is direct. It depends on Mn(2+) as a cofactor. The cofactor is Mg(2+).

Its subcellular location is the cell membrane. The enzyme catalyses L-seryl-[protein] + ATP = O-phospho-L-seryl-[protein] + ADP + H(+). It carries out the reaction L-threonyl-[protein] + ATP = O-phospho-L-threonyl-[protein] + ADP + H(+). In terms of biological role, kinase that contributes to activation of the hypersensitive response, a form of programmed cell death, upon fungal infection. Secreted protein that contributes to activation of the hypersensitive response, a form of programmed cell death, upon fungal infection. May sense the presence of fungal material and relay the signal to WAK17 isoform 1. This Zea mays (Maize) protein is Wall-associated receptor kinase 17.